The following is a 446-amino-acid chain: Histone acetyltransferase type B subunit 2 (446 aa).

WD repeat units follow at residues 138-178 (DHPG…ITPS), 189-229 (GHKE…GTSK), 231-270 (LKYS…QIID), 286-326 (GHSD…SKVH), and 330-370 (GHQD…DEQT). The segment at 372-376 (DDAED) is interaction with the histone H4 N-terminus. One copy of the WD 6 repeat lies at 387-427 (GHTNHLADFSWNRNDPWLVCSAAEDNLLQIWKVANSIVSKE). The tract at residues 427–446 (EPADMSTPELDDPKPKQSSH) is disordered. Over residues 437-446 (DDPKPKQSSH) the composition is skewed to basic and acidic residues.

Belongs to the WD repeat RBAP46/RBAP48/MSI1 family. As to quaternary structure, component of the HAT-B complex composed of at least hat-1 and hat-2. The HAT-B complex binds to histone H4 tail.

It is found in the cytoplasm. Its subcellular location is the nucleus. Regulatory subunit of the histone acetylase B (HAT-B) complex. The complex acetylates 'Lys-12' of histone H4 which is required for telomeric silencing. In Neurospora crassa (strain ATCC 24698 / 74-OR23-1A / CBS 708.71 / DSM 1257 / FGSC 987), this protein is Histone acetyltransferase type B subunit 2 (hat-2).